The sequence spans 156 residues: Phosphopantetheine adenylyltransferase (156 aa).

Residue Thr-9 participates in substrate binding. ATP is bound by residues 9–10 (TF) and His-17. 3 residues coordinate substrate: Lys-41, Leu-73, and Arg-87. ATP contacts are provided by residues 88–90 (GVR), Glu-98, and 123–129 (WVFVSST).

It belongs to the bacterial CoaD family. Homohexamer. It depends on Mg(2+) as a cofactor.

The protein resides in the cytoplasm. The catalysed reaction is (R)-4'-phosphopantetheine + ATP + H(+) = 3'-dephospho-CoA + diphosphate. It functions in the pathway cofactor biosynthesis; coenzyme A biosynthesis; CoA from (R)-pantothenate: step 4/5. Functionally, reversibly transfers an adenylyl group from ATP to 4'-phosphopantetheine, yielding dephospho-CoA (dPCoA) and pyrophosphate. In Haemophilus influenzae (strain PittEE), this protein is Phosphopantetheine adenylyltransferase.